Consider the following 184-residue polypeptide: Probable RNA 2'-phosphotransferase (184 aa).

Belongs to the KptA/TPT1 family.

Its function is as follows. Removes the 2'-phosphate from RNA via an intermediate in which the phosphate is ADP-ribosylated by NAD followed by a presumed transesterification to release the RNA and generate ADP-ribose 1''-2''-cyclic phosphate (APPR&gt;P). May function as an ADP-ribosylase. The chain is Probable RNA 2'-phosphotransferase from Burkholderia pseudomallei (strain K96243).